The sequence spans 427 residues: Glutamate-1-semialdehyde 2,1-aminomutase 1 (427 aa).

N6-(pyridoxal phosphate)lysine is present on Lys-267.

It belongs to the class-III pyridoxal-phosphate-dependent aminotransferase family. HemL subfamily. In terms of assembly, homodimer. Requires pyridoxal 5'-phosphate as cofactor.

The protein localises to the cytoplasm. The catalysed reaction is (S)-4-amino-5-oxopentanoate = 5-aminolevulinate. It participates in porphyrin-containing compound metabolism; protoporphyrin-IX biosynthesis; 5-aminolevulinate from L-glutamyl-tRNA(Glu): step 2/2. The chain is Glutamate-1-semialdehyde 2,1-aminomutase 1 from Macrococcus caseolyticus (strain JCSC5402) (Macrococcoides caseolyticum).